The following is a 201-amino-acid chain: Peptidyl-tRNA hydrolase (201 aa).

Tyr17 lines the tRNA pocket. The Proton acceptor role is filled by His22. TRNA is bound by residues Phe76, Asn78, and Asn124.

The protein belongs to the PTH family. In terms of assembly, monomer.

The protein localises to the cytoplasm. It carries out the reaction an N-acyl-L-alpha-aminoacyl-tRNA + H2O = an N-acyl-L-amino acid + a tRNA + H(+). Hydrolyzes ribosome-free peptidyl-tRNAs (with 1 or more amino acids incorporated), which drop off the ribosome during protein synthesis, or as a result of ribosome stalling. Functionally, catalyzes the release of premature peptidyl moieties from peptidyl-tRNA molecules trapped in stalled 50S ribosomal subunits, and thus maintains levels of free tRNAs and 50S ribosomes. This is Peptidyl-tRNA hydrolase from Nitratidesulfovibrio vulgaris (strain ATCC 29579 / DSM 644 / CCUG 34227 / NCIMB 8303 / VKM B-1760 / Hildenborough) (Desulfovibrio vulgaris).